Reading from the N-terminus, the 952-residue chain is Probable RNA-binding protein 19 (952 aa).

The RRM 1 domain occupies 2–79 (SRLIVKNLPN…TRITVEFCKS (78 aa)). Disordered regions lie at residues 85–126 (KPRA…LEKL), 159–267 (KAKT…RGAV), and 367–395 (KQAP…EEED). Residues 95–109 (KSSQPKQPSQDSVPS) are compositionally biased toward low complexity. The span at 163–180 (KASSDYLNFDSDSNSDSG) shows a compositional bias: polar residues. 3 positions are modified to phosphoserine: serine 177, serine 179, and serine 183. 2 stretches are compositionally biased toward acidic residues: residues 181 to 196 (QESE…EEEQ) and 224 to 251 (SSED…EEEG). RRM domains lie at 293-368 (YTVK…REKQ) and 400-478 (GRLF…PSTI). A Glycyl lysine isopeptide (Lys-Gly) (interchain with G-Cter in SUMO2) cross-link involves residue lysine 479. Positions 481-504 (EASQEANAPGSSYKKKKEAMDKAN) are disordered. The region spanning 584 to 656 (TVILAKNLPA…VPLYLEWAPI (73 aa)) is the RRM 4 domain. A compositionally biased stretch (basic and acidic residues) spans 664-679 (QKKDSQHEQPAEKAEV). The tract at residues 664–719 (QKKDSQHEQPAEKAEVEQETVLDPEGEKASVEGAEASTGKMEEEEEEEEEEEEESI) is disordered. Serine 693 is subject to Phosphoserine. Positions 705–718 (EEEEEEEEEEEEES) are enriched in acidic residues. RRM domains follow at residues 722–803 (CTLF…ISER) and 824–904 (SKIL…WADS). 2 positions are modified to phosphoserine: serine 928 and serine 944.

Belongs to the RRM MRD1 family. In terms of tissue distribution, expressed in the crypts of Lieberkuhn of the intestine (at protein level).

The protein resides in the nucleus. It localises to the nucleolus. It is found in the nucleoplasm. Its subcellular location is the cytoplasm. The protein localises to the chromosome. Functionally, plays a role in embryo pre-implantation development. The protein is Probable RNA-binding protein 19 (Rbm19) of Mus musculus (Mouse).